A 198-amino-acid polypeptide reads, in one-letter code: UPF0548 protein DR_2035 (198 aa).

Belongs to the UPF0548 family.

In Deinococcus radiodurans (strain ATCC 13939 / DSM 20539 / JCM 16871 / CCUG 27074 / LMG 4051 / NBRC 15346 / NCIMB 9279 / VKM B-1422 / R1), this protein is UPF0548 protein DR_2035.